A 201-amino-acid chain; its full sequence is Adenylyl-sulfate kinase (201 aa).

Positions 1–23 (MALHDENVVWHSHPVTPQQREQH) are disordered. Residue 35 to 42 (GLSGSGKS) coordinates ATP. Serine 109 serves as the catalytic Phosphoserine intermediate.

Belongs to the APS kinase family.

It carries out the reaction adenosine 5'-phosphosulfate + ATP = 3'-phosphoadenylyl sulfate + ADP + H(+). The protein operates within sulfur metabolism; hydrogen sulfide biosynthesis; sulfite from sulfate: step 2/3. In terms of biological role, catalyzes the synthesis of activated sulfate. This Escherichia coli O6:K15:H31 (strain 536 / UPEC) protein is Adenylyl-sulfate kinase.